Here is a 196-residue protein sequence, read N- to C-terminus: Cilia- and flagella-associated protein 107 (196 aa).

2 mn regions span residues 47–62 and 97–109; these read TPQCIYRKEYVPMPDH and ISTYDDHYNRHNY.

As to quaternary structure, microtubule inner protein component of sperm flagellar doublet microtubules.

The protein localises to the cytoplasm. It is found in the cytoskeleton. It localises to the cilium axoneme. The protein resides in the flagellum axoneme. In terms of biological role, microtubule inner protein (MIP) part of the dynein-decorated doublet microtubules (DMTs) in cilia axoneme, which is required for motile cilia beating. The polypeptide is Cilia- and flagella-associated protein 107 (Mus musculus (Mouse)).